The chain runs to 575 residues: Sulfite reductase [NADPH] hemoprotein beta-component (575 aa).

Residues Cys-438, Cys-444, Cys-484, and Cys-488 each contribute to the [4Fe-4S] cluster site. Cys-488 contacts siroheme.

Belongs to the nitrite and sulfite reductase 4Fe-4S domain family. Alpha(8)-beta(8). The alpha component is a flavoprotein, the beta component is a hemoprotein. Requires siroheme as cofactor. It depends on [4Fe-4S] cluster as a cofactor.

It catalyses the reaction hydrogen sulfide + 3 NADP(+) + 3 H2O = sulfite + 3 NADPH + 4 H(+). Its pathway is sulfur metabolism; hydrogen sulfide biosynthesis; hydrogen sulfide from sulfite (NADPH route): step 1/1. In terms of biological role, component of the sulfite reductase complex that catalyzes the 6-electron reduction of sulfite to sulfide. This is one of several activities required for the biosynthesis of L-cysteine from sulfate. The chain is Sulfite reductase [NADPH] hemoprotein beta-component from Vibrio atlanticus (strain LGP32) (Vibrio splendidus (strain Mel32)).